A 1407-amino-acid polypeptide reads, in one-letter code: DNA-directed RNA polymerase subunit beta' (1407 aa).

Zn(2+) is bound by residues cysteine 70, cysteine 72, cysteine 85, and cysteine 88. 3 residues coordinate Mg(2+): aspartate 460, aspartate 462, and aspartate 464. Residues cysteine 814, cysteine 888, cysteine 895, and cysteine 898 each contribute to the Zn(2+) site. The residue at position 972 (lysine 972) is an N6-acetyllysine.

Belongs to the RNA polymerase beta' chain family. As to quaternary structure, the RNAP catalytic core consists of 2 alpha, 1 beta, 1 beta' and 1 omega subunit. When a sigma factor is associated with the core the holoenzyme is formed, which can initiate transcription. Mg(2+) is required as a cofactor. The cofactor is Zn(2+).

It carries out the reaction RNA(n) + a ribonucleoside 5'-triphosphate = RNA(n+1) + diphosphate. DNA-dependent RNA polymerase catalyzes the transcription of DNA into RNA using the four ribonucleoside triphosphates as substrates. The chain is DNA-directed RNA polymerase subunit beta' from Escherichia coli O1:K1 / APEC.